Consider the following 136-residue polypeptide: Large ribosomal subunit protein uL16 (136 aa).

The protein belongs to the universal ribosomal protein uL16 family. As to quaternary structure, part of the 50S ribosomal subunit.

Functionally, binds 23S rRNA and is also seen to make contacts with the A and possibly P site tRNAs. In Histophilus somni (strain 129Pt) (Haemophilus somnus), this protein is Large ribosomal subunit protein uL16.